A 480-amino-acid polypeptide reads, in one-letter code: Ribulose bisphosphate carboxylase large chain (480 aa).

The propeptide occupies Met-1–Ser-2. N-acetylproline is present on Pro-3. Position 14 is an N6,N6,N6-trimethyllysine (Lys-14). Substrate contacts are provided by Asn-123 and Thr-173. Lys-175 serves as the catalytic Proton acceptor. Substrate is bound at residue Lys-177. Positions 201, 203, and 204 each coordinate Mg(2+). An N6-carboxylysine modification is found at Lys-201. His-294 (proton acceptor) is an active-site residue. Arg-295, His-327, and Ser-379 together coordinate substrate.

The protein belongs to the RuBisCO large chain family. Type I subfamily. As to quaternary structure, heterohexadecamer of 8 large chains and 8 small chains; disulfide-linked. The disulfide link is formed within the large subunit homodimers. Mg(2+) serves as cofactor. Post-translationally, the disulfide bond which can form in the large chain dimeric partners within the hexadecamer appears to be associated with oxidative stress and protein turnover.

The protein localises to the plastid. It localises to the chloroplast. It catalyses the reaction 2 (2R)-3-phosphoglycerate + 2 H(+) = D-ribulose 1,5-bisphosphate + CO2 + H2O. It carries out the reaction D-ribulose 1,5-bisphosphate + O2 = 2-phosphoglycolate + (2R)-3-phosphoglycerate + 2 H(+). Its function is as follows. RuBisCO catalyzes two reactions: the carboxylation of D-ribulose 1,5-bisphosphate, the primary event in carbon dioxide fixation, as well as the oxidative fragmentation of the pentose substrate in the photorespiration process. Both reactions occur simultaneously and in competition at the same active site. The sequence is that of Ribulose bisphosphate carboxylase large chain from Acorus calamus var. americanus (American sweet flag).